The primary structure comprises 583 residues: SHC-transforming protein 1 (583 aa).

Residue Met1 is modified to N-acetylmethionine. Disordered stretches follow at residues 1-92 (MDLL…DDGE) and 113-137 (KLSG…WTRH). Residues 16 to 44 (ESLSSLEEGASGSTPPEELPSPSASSLGP) show a composition bias toward low complexity. Ser36 carries the phosphoserine modification. Ser139 is subject to Phosphoserine. Lys154 carries the post-translational modification N6-acetyllysine. One can recognise a PID domain in the interval 156–339 (MGPGVSYLVR…AGFDGSAWDE (184 aa)). The interval 340-487 (EEEEPPDHQY…SMAEQLRGEP (148 aa)) is CH1. Residues Tyr349 and Tyr350 each carry the phosphotyrosine modification. Residues 372 to 416 (AAPGAARSTAPSAQTPSHLGATLPVGQPVGGDPEVRKQMPPPPPC) form a disordered region. Position 427 is a phosphotyrosine (Tyr427). A Phosphoserine modification is found at Ser453. Residues 488 to 579 (WFHGKLSRRE…GSELCLQQPV (92 aa)) enclose the SH2 domain.

Interacts with CPNE3; this interaction may mediate the binding of CPNE3 with ERBB2. Interacts with the Trk receptors NTRK1, NTRK2 and NTRK3; in a phosphotyrosine-dependent manner. Interacts with the NPXY motif of tyrosine-phosphorylated IGF1R and INSR in vitro via the PID domain. Once activated, binds to GRB2. Interacts with tyrosine-phosphorylated CD3T and DDR2. Interacts with the N-terminal region of APS. Interacts with phosphorylated LRP1 and IRS4. Interacts with INPP5D/SHIP1 and INPPL1/SHIP2. Interacts with ALK, GAB2, GRB7 and KIT. Interacts with PTPN6/SHP (tyrosine phosphorylated). Identified in a complex containing FGFR4, NCAM1, CDH2, PLCG1, FRS2, SRC, SHC1, GAP43 and CTTN. Interacts with FLT4 (tyrosine-phosphorylated). Interacts with EPHB1 and GRB2; activates the MAPK/ERK cascade to regulate cell migration. Interacts with PDGFRB (tyrosine-phosphorylated). Interacts with ERBB4. Interacts with TEK/TIE2 (tyrosine-phosphorylated). Interacts with PTK2/FAK1. Interacts with CEACAM1; this interaction is CEACAM1-phosphorylation-dependent and mediates interaction with EGFR or INSR resulting in decrease coupling of SHC1 to the MAPK3/ERK1-MAPK1/ERK2 pathway. Interacts (via PID domain) with PEAK1 (when phosphorylated). Found in a complex with PPP1CA, PPP1CC, SHC1 and PEAK1. Phosphorylated by activated epidermal growth factor receptor. Phosphorylated in response to KIT signaling. Tyrosine phosphorylated in response to FLT3 and FLT4 signaling and by ligand-activated ALK. Tyrosine phosphorylated by ligand-activated PDGFRB. Tyrosine phosphorylated by TEK/TIE2. May be tyrosine phosphorylated by activated PTK2/FAK1. Tyrosine phosphorylated by activated PTK2B/PYK2. Dephosphorylation by PTPN2 may regulate interaction with GRB2.

It localises to the cytoplasm. The protein resides in the cell junction. Its subcellular location is the focal adhesion. Functionally, signaling adapter that couples activated growth factor receptors to signaling pathways. Participates in a signaling cascade initiated by activated KIT and KITLG/SCF. Participates in signaling downstream of the angiopoietin receptor TEK/TIE2, and plays a role in the regulation of endothelial cell migration and sprouting angiogenesis. The chain is SHC-transforming protein 1 (SHC1) from Pongo abelii (Sumatran orangutan).